The primary structure comprises 115 residues: MDAKKMFVALVLIATFALPSLATFEKDFITPETIQAILKKSAPLSNIMLEEDVINALLKSKTVISNPIIEEAFLKNSNGLNGIPCGESCVWIPCISAAIGCSCKSKVCYRNSLDN.

An N-terminal signal peptide occupies residues 1–22; the sequence is MDAKKMFVALVLIATFALPSLA. The propeptide occupies 23 to 81; sequence TFEKDFITPETIQAILKKSAPLSNIMLEEDVINALLKSKTVISNPIIEEAFLKNSNGLN. Residues 82 to 111 constitute a cross-link (cyclopeptide (Gly-Asn)); it reads GIPCGESCVWIPCISAAIGCSCKSKVCYRN. 3 disulfides stabilise this stretch: Cys85–Cys101, Cys89–Cys103, and Cys94–Cys108. The propeptide occupies 112 to 115; that stretch reads SLDN.

In terms of processing, cycloviolacin-O13 is a cyclic peptide. In terms of tissue distribution, expressed in leaves, petals, petioles, roots and runners (at protein level).

Probably participates in a plant defense mechanism. Has hemolytic activity. This is Cycloviolacin-O13 from Viola odorata (Sweet violet).